Consider the following 149-residue polypeptide: Nucleoside diphosphate kinase (149 aa).

Lysine 9, phenylalanine 57, arginine 85, threonine 91, arginine 102, and asparagine 112 together coordinate ATP. Histidine 115 acts as the Pros-phosphohistidine intermediate in catalysis.

This sequence belongs to the NDK family. As to quaternary structure, homotetramer. It depends on Mg(2+) as a cofactor.

The protein localises to the cytoplasm. It carries out the reaction a 2'-deoxyribonucleoside 5'-diphosphate + ATP = a 2'-deoxyribonucleoside 5'-triphosphate + ADP. The enzyme catalyses a ribonucleoside 5'-diphosphate + ATP = a ribonucleoside 5'-triphosphate + ADP. Functionally, major role in the synthesis of nucleoside triphosphates other than ATP. The ATP gamma phosphate is transferred to the NDP beta phosphate via a ping-pong mechanism, using a phosphorylated active-site intermediate. The polypeptide is Nucleoside diphosphate kinase (Nostoc sp. (strain PCC 7120 / SAG 25.82 / UTEX 2576)).